A 777-amino-acid chain; its full sequence is Elongation factor G, mitochondrial (777 aa).

Residues 34 to 338 (LRQRNVGISA…GMCAYLPNPM (305 aa)) enclose the tr-type G domain. Residues 43 to 50 (AHIDSGKT), 136 to 140 (DTPGH), and 190 to 193 (NKMD) each bind GTP.

The protein belongs to the TRAFAC class translation factor GTPase superfamily. Classic translation factor GTPase family. EF-G/EF-2 subfamily.

It is found in the mitochondrion. The protein operates within protein biosynthesis; polypeptide chain elongation. Functionally, mitochondrial GTPase that catalyzes the GTP-dependent ribosomal translocation step during translation elongation. During this step, the ribosome changes from the pre-translocational (PRE) to the post-translocational (POST) state as the newly formed A-site-bound peptidyl-tRNA and P-site-bound deacylated tRNA move to the P and E sites, respectively. Catalyzes the coordinated movement of the two tRNA molecules, the mRNA and conformational changes in the ribosome. In Malassezia globosa (strain ATCC MYA-4612 / CBS 7966) (Dandruff-associated fungus), this protein is Elongation factor G, mitochondrial.